A 424-amino-acid chain; its full sequence is Carbohydrate sulfotransferase 8 (424 aa).

Residues 1-10 lie on the Cytoplasmic side of the membrane; sequence MTLRPGTMRL. The chain crosses the membrane as a helical; Signal-anchor for type II membrane protein span at residues 11–31; that stretch reads ACMFSSILLFGAAGLLLFISL. The Lumenal segment spans residues 32-424; the sequence is QDPTELAPQQ…NYSKPFADLY (393 aa). A disordered region spans residues 47-107; the sequence is FNIRPRQPHH…PLQRGTRLRL (61 aa). The span at 66–77 shows a compositional bias: basic and acidic residues; it reads GDLKEPTERVTR. A glycan (N-linked (GlcNAc...) asparagine) is linked at Asn-128. Residues 198-204 and 258-266 each bind 3'-phosphoadenylyl sulfate; these read PKAGCSN and REPFERLVS. 3 N-linked (GlcNAc...) asparagine glycosylation sites follow: Asn-294, Asn-367, and Asn-415.

It belongs to the sulfotransferase 2 family. As to expression, predominantly expressed in pituitary gland. In brain, it is expressed in pituitary gland, cerebellum, medulla oblongata, pons, thalamus and spinal cord. Expressed in the epidermis. Expressed at lower level in lung, spleen, adrenal gland, placenta, prostate, testis, mammary gland and trachea.

The protein resides in the golgi apparatus membrane. In terms of biological role, catalyzes the transfer of sulfate to position 4 of non-reducing N-acetylgalactosamine (GalNAc) residues in both N-glycans and O-glycans. Required for biosynthesis of glycoprotein hormones lutropin and thyrotropin, by mediating sulfation of their carbohydrate structures. Only active against terminal GalNAcbeta1,GalNAcbeta. Not active toward chondroitin. The sequence is that of Carbohydrate sulfotransferase 8 (CHST8) from Homo sapiens (Human).